The sequence spans 296 residues: Probable porphobilinogen deaminase (296 aa).

Position 241 is an S-(dipyrrolylmethanemethyl)cysteine (cysteine 241).

The protein belongs to the HMBS family. The cofactor is dipyrromethane.

The enzyme catalyses 4 porphobilinogen + H2O = hydroxymethylbilane + 4 NH4(+). It functions in the pathway porphyrin-containing compound metabolism; protoporphyrin-IX biosynthesis; coproporphyrinogen-III from 5-aminolevulinate: step 2/4. Its function is as follows. Tetrapolymerization of the monopyrrole PBG into the hydroxymethylbilane pre-uroporphyrinogen in several discrete steps. This Pyrobaculum calidifontis (strain DSM 21063 / JCM 11548 / VA1) protein is Probable porphobilinogen deaminase.